The following is a 156-amino-acid chain: ATP synthase subunit b (156 aa).

The chain crosses the membrane as a helical span at residues 7 to 29; sequence LFAQMVVFLVLAWFTMKFVWPPL.

It belongs to the ATPase B chain family. In terms of assembly, F-type ATPases have 2 components, F(1) - the catalytic core - and F(0) - the membrane proton channel. F(1) has five subunits: alpha(3), beta(3), gamma(1), delta(1), epsilon(1). F(0) has three main subunits: a(1), b(2) and c(10-14). The alpha and beta chains form an alternating ring which encloses part of the gamma chain. F(1) is attached to F(0) by a central stalk formed by the gamma and epsilon chains, while a peripheral stalk is formed by the delta and b chains.

Its subcellular location is the cell inner membrane. In terms of biological role, f(1)F(0) ATP synthase produces ATP from ADP in the presence of a proton or sodium gradient. F-type ATPases consist of two structural domains, F(1) containing the extramembraneous catalytic core and F(0) containing the membrane proton channel, linked together by a central stalk and a peripheral stalk. During catalysis, ATP synthesis in the catalytic domain of F(1) is coupled via a rotary mechanism of the central stalk subunits to proton translocation. Component of the F(0) channel, it forms part of the peripheral stalk, linking F(1) to F(0). In Burkholderia cenocepacia (strain ATCC BAA-245 / DSM 16553 / LMG 16656 / NCTC 13227 / J2315 / CF5610) (Burkholderia cepacia (strain J2315)), this protein is ATP synthase subunit b.